The sequence spans 146 residues: Probable acetyltransferase HI_0677 (146 aa).

In terms of domain architecture, N-acetyltransferase spans 1 to 146 (MKLFKAEQWN…ERLFELSLSC (146 aa)).

The sequence is that of Probable acetyltransferase HI_0677 from Haemophilus influenzae (strain ATCC 51907 / DSM 11121 / KW20 / Rd).